A 268-amino-acid polypeptide reads, in one-letter code: MKKQAIGFIDSGVGGLTVVKEAMRQLPNESIYYVGDTARCPYGPRPEDQVRKFTWEMTHFLLDKNIKMLVIACNTATAAALKDIKKKLAIPVIGVILPGSRAAIKATHTNRIGVIGTEGTVKSNQYKKMIHSKDTKALVTSLACPKFVPLVESNEYSSAIAKKVVAETLRPLKNEGLDTLILGCTHYPLLRPIIQNTLGDSVTLIDSGAETVSEVSTILDYFNLAVDSQNKEKAERNFYTTGSSQMFHAIASEWLQLDDLAVEHITLG.

Residues 10–11 and 42–43 contribute to the substrate site; these read DS and YG. C73 acts as the Proton donor/acceptor in catalysis. Residue 74–75 coordinates substrate; it reads NT. C184 serves as the catalytic Proton donor/acceptor. Substrate is bound at residue 185 to 186; the sequence is TH.

This sequence belongs to the aspartate/glutamate racemases family.

The enzyme catalyses L-glutamate = D-glutamate. It participates in cell wall biogenesis; peptidoglycan biosynthesis. Provides the (R)-glutamate required for cell wall biosynthesis. This is Glutamate racemase from Carnobacterium sp. (strain St2).